Reading from the N-terminus, the 209-residue chain is Chaperone protein TorD (209 aa).

This sequence belongs to the TorD/DmsD family. TorD subfamily.

The protein resides in the cytoplasm. Its function is as follows. Involved in the biogenesis of TorA. Acts on TorA before the insertion of the molybdenum cofactor and, as a result, probably favors a conformation of the apoenzyme that is competent for acquiring the cofactor. This chain is Chaperone protein TorD, found in Shewanella sp. (strain MR-4).